The chain runs to 1612 residues: MSSPSKPTSPFVDDIEHESGSASNGLSSMSPFDDSFQFEKPSSAHGNIEVAKTGGSVLKRQSKPMKDISTPDLSKVTFDGIDDYSNDNDINDDDELNGKKTEIHEHENEVDDDLHSFQATPMPNTGGFEDVELDNNEGSNNDSQADHKLKRVRFGTRRNKSGRIDINRSKTLKWAKKNFHNAIDEFSTKEDSLENSALQNRSDELRTVYYNLPLPEDMLDEDGLPLAVYPRNKIRTTKYTPLTFFPKNILFQFHNFANIYFLILLILGAFQIFGVTNPGFASVPLIVIVIITAIKDGIEDSRRTVLDLEVNNTRTHILSGVKNENVAVDNVSLWRRFKKANTRALIKIFEYFSENLTAAGREKKLQKKREELRRKRNSRSFGPRGSLDSIGSYRMSADFGRPSLDYENLNQTMSQANRYNDGENLVDRTLQPNPECRFAKDYWKNVKVGDIVRVHNNDEIPADMILLSTSDVDGACYVETKNLDGETNLKVRQSLKCSKIIKSSRDITRTKFWVESEGPHANLYSYQGNFKWQDTQNGNIRNEPVNINNLLLRGCTLRNTKWAMGMVIFTGDDTKIMINAGVTPTKKSRISRELNFSVILNFVLLFILCFTAGIVNGVYYKQKPRSRDYFEFGTIGGSASTNGFVSFWVAVILYQSLVPISLYISVEIIKTAQAIFIYTDVLLYNAKLDYPCTPKSWNISDDLGQIEYIFSDKTGTLTQNVMEFKKCTINGVSYGRAYTEALAGLRKRQGVDVESEGRREKEEIAKDRETMIDELRSMSDNTQFCPEDLTFVSKEIVEDLKGSSGDHQQKCCEHFLLALALCHSVLVEPNKDDPKKLDIKAQSPDESALVSTARQLGYSFVGSSKSGLIVEIQGVQKEFQVLNVLEFNSSRKRMSCIIKIPGSTPKDEPKALLICKGADSVIYSRLDRTQNDATLLEKTALHLEEYATEGLRTLCLAQRELTWSEYERWVKTYDVAAASVTNREEELDKVTDVIERELILLGGTAIEDRLQDGVPDSIALLAEAGIKLWVLTGDKVETAINIGFSCNVLNNDMELLVVKASGEDVEEFGSDPIQVVNNLVTKYLREKFGMSGSEEELKEAKREHGLPQGNFAVIIDGDALKVALNGEEMRRKFLLLCKNCKAVLCCRVSPAQKAAVVKLVKKTLDVMTLAIGDGSNDVAMIQSADVGVGIAGEEGRQAVMCSDYAIGQFRYVTRLVLVHGKWCYKRLAEMIPQFFYKNVIFTLSLFWYGIYNNFDGSYLFEYTYLTFYNLAFTSVPVILLAVLDQDVSDTVSMLVPQLYRVGILRKEWNQTKFLWYMLDGVYQSVICFFFPYLAYHKNMVVTENGLGLDHRYFVGVFVTAIAVTSCNFYVFMEQYRWDWFCGLFICLSLAVFYGWTGIWTSSSSSNEFYKGAARVFAQPAYWAVLFVGVLFCLLPRFTIDCIRKIFYPKDIEIVREMWLRGDFDLYPQGYDPTDPSRPRINEIRPLTDFKEPISLDTHFDGVSHSQETIVTEEIPMSILNGEQGSRKGYRVSTTLERRDQLSPVTTTNNLPRRSMASARGNKLRTSLDRTREEMLANHQLDTRYSVERARASLDLPGINHAETLLSQRSRDR.

Positions 1 to 74 (MSSPSKPTSP…MKDISTPDLS (74 aa)) are disordered. At 1–252 (MSSPSKPTSP…TFFPKNILFQ (252 aa)) the chain is on the cytoplasmic side. Residues 20–30 (GSASNGLSSMS) show a composition bias toward low complexity. Threonine 70 is modified (phosphothreonine). Serine 85 is modified (phosphoserine). A helical transmembrane segment spans residues 253–273 (FHNFANIYFLILLILGAFQIF). The involved in phosphatidylcholine substrate selection stretch occupies residues 272-279 (IFGVTNPG). Topologically, residues 274–277 (GVTN) are extracellular. Residues 278–298 (PGFASVPLIVIVIITAIKDGI) traverse the membrane as a helical segment. The Cytoplasmic portion of the chain corresponds to 299–598 (EDSRRTVLDL…RISRELNFSV (300 aa)). A compositionally biased stretch (basic and acidic residues) spans 364–373 (KLQKKREELR). Positions 364 to 384 (KLQKKREELRRKRNSRSFGPR) are disordered. Serine 389, serine 392, serine 396, and serine 403 each carry phosphoserine. Tyrosine 406 is subject to Phosphotyrosine. A helical transmembrane segment spans residues 599 to 619 (ILNFVLLFILCFTAGIVNGVY). Over 620 to 639 (YKQKPRSRDYFEFGTIGGSA) the chain is Extracellular. The tract at residues 631-635 (EFGTI) is involved in phosphatidylcholine substrate selection. Residues 640–660 (STNGFVSFWVAVILYQSLVPI) traverse the membrane as a helical segment. Over 661-1231 (SLYISVEIIK…WCYKRLAEMI (571 aa)) the chain is Cytoplasmic. Aspartate 712 serves as the catalytic 4-aspartylphosphate intermediate. The ATP site is built by aspartate 712, lysine 713, and threonine 714. Aspartate 712 contacts Mg(2+). Threonine 714 serves as a coordination point for Mg(2+). Residue threonine 782 is modified to Phosphothreonine. The ATP site is built by glutamate 846, phenylalanine 887, serine 889, lysine 892, and lysine 916. A Glycyl lysine isopeptide (Lys-Gly) (interchain with G-Cter in ubiquitin) cross-link involves residue lysine 938. Positions 952, 953, 1032, 1033, 1034, 1147, and 1153 each coordinate ATP. Residue aspartate 1173 participates in Mg(2+) binding. Residues asparagine 1176 and aspartate 1177 each coordinate ATP. Aspartate 1177 provides a ligand contact to Mg(2+). The chain crosses the membrane as a helical span at residues 1232–1252 (PQFFYKNVIFTLSLFWYGIYN). The Extracellular segment spans residues 1253 to 1262 (NFDGSYLFEY). Residues 1263 to 1283 (TYLTFYNLAFTSVPVILLAVL) traverse the membrane as a helical segment. The Cytoplasmic portion of the chain corresponds to 1284 to 1313 (DQDVSDTVSMLVPQLYRVGILRKEWNQTKF). A helical transmembrane segment spans residues 1314–1334 (LWYMLDGVYQSVICFFFPYLA). Residues 1335-1350 (YHKNMVVTENGLGLDH) lie on the Extracellular side of the membrane. A helical membrane pass occupies residues 1351–1371 (RYFVGVFVTAIAVTSCNFYVF). Residues 1372–1377 (MEQYRW) are Cytoplasmic-facing. Residues 1378–1398 (DWFCGLFICLSLAVFYGWTGI) traverse the membrane as a helical segment. The Extracellular portion of the chain corresponds to 1399-1418 (WTSSSSSNEFYKGAARVFAQ). The helical transmembrane segment at 1419-1439 (PAYWAVLFVGVLFCLLPRFTI) threads the bilayer. Arginine 1436 contacts a 1,2-diacyl-sn-glycero-3-phospho-L-serine. At 1440–1612 (DCIRKIFYPK…TLLSQRSRDR (173 aa)) the chain is on the cytoplasmic side. Serine 1542 carries the post-translational modification Phosphoserine. The interval 1544-1563 (VTTTNNLPRRSMASARGNKL) is disordered. A Phosphoserine modification is found at serine 1592.

This sequence belongs to the cation transport ATPase (P-type) (TC 3.A.3) family. Type IV subfamily. As to quaternary structure, component of a flippase complex consisting of DNF1 and LEM3. Interacts with LEM3; the interaction is direct. It depends on Mg(2+) as a cofactor. In terms of processing, phosphorylated by FPK1 and KIN82.

The protein resides in the cell membrane. It catalyses the reaction ATP + H2O + phospholipidSide 1 = ADP + phosphate + phospholipidSide 2.. The enzyme catalyses a 1,2-diacyl-sn-glycero-3-phosphoethanolamine(out) + ATP + H2O = a 1,2-diacyl-sn-glycero-3-phosphoethanolamine(in) + ADP + phosphate + H(+). It carries out the reaction a 1,2-diacyl-sn-glycero-3-phosphocholine(out) + ATP + H2O = a 1,2-diacyl-sn-glycero-3-phosphocholine(in) + ADP + phosphate + H(+). The catalysed reaction is a beta-D-glucosyl-(1&lt;-&gt;1')-N-acylsphing-4-enine(out) + ATP + H2O = a beta-D-glucosyl-(1&lt;-&gt;1')-N-acylsphing-4-enine(in) + ADP + phosphate + H(+). It catalyses the reaction a 1,2-diacyl-sn-glycero-3-phospho-L-serine(out) + ATP + H2O = a 1,2-diacyl-sn-glycero-3-phospho-L-serine(in) + ADP + phosphate + H(+). Its activity is regulated as follows. Phosphatidylcholine flippase activity is inhibited by glucosylsphingosine, lactosylsphingosine, lysophosphatidylcholine and to a lesser degree sphingosine-1-phosphate and lysosphingomyelin. Glucosylceramide flippase activity is inhibited by lysophosphatidylcholine, glucosylsphingosine and to a lesser degree lactosylsphingosine whereas lysosphingomyelin has a stimulatory effect at low concentrations. Its function is as follows. Catalytic component of a P4-ATPase flippase complex which catalyzes the hydrolysis of ATP coupled to the transport of glucosylceramide, phosphatidylcholine, phosphatidylethanolamine, and small amounts of phosphatidylserine from the lumenal to the cytosolic leaflet of the cell membrane and ensures the maintenance of asymmetric distribution of phospholipids. Does not appear to transport sphingomyelin, inositol phosphoceramide or phosphatidic acid. Required for efficient endocytosis. Required for protein transport from Golgi to vacuoles. This is Phospholipid-transporting ATPase DNF2 (DNF2) from Saccharomyces cerevisiae (strain ATCC 204508 / S288c) (Baker's yeast).